The sequence spans 668 residues: Patellin-5 (668 aa).

Residues methionine 1–arginine 263 form a disordered region. 4 stretches are compositionally biased toward basic and acidic residues: residues glutamate 55–threonine 68, alanine 82–lysine 100, threonine 107–lysine 125, and valine 132–lysine 150. Polar residues predominate over residues threonine 170–serine 186. Acidic residues predominate over residues valine 218–valine 231. A compositionally biased stretch (pro residues) spans proline 244 to serine 254. Serine 290 is modified (phosphoserine). Residues aspartate 377–cysteine 552 form the CRAL-TRIO domain. The GOLD domain occupies serine 556–valine 662.

It belongs to the patellin family.

The protein resides in the membrane. Its subcellular location is the cytoplasm. Its function is as follows. Carrier protein that may be involved in membrane-trafficking events associated with cell plate formation during cytokinesis. Binds to some hydrophobic molecules such as phosphoinositides and promotes their transfer between the different cellular sites. The polypeptide is Patellin-5 (PATL5) (Arabidopsis thaliana (Mouse-ear cress)).